Here is an 87-residue protein sequence, read N- to C-terminus: UPF0473 protein Dred_0776 (87 aa).

It belongs to the UPF0473 family.

This chain is UPF0473 protein Dred_0776, found in Desulforamulus reducens (strain ATCC BAA-1160 / DSM 100696 / MI-1) (Desulfotomaculum reducens).